The sequence spans 369 residues: MASSKCLLLPSLPFELIEEILYKIPAESLIRFKSTCKKWYNLITEKRFMYNHLDHYSPERFIRTYDQQIIDPVTEILSDALIPDEFRDLYPIYSMVHCDGLMLCTCRKWDNSLAVWNPVLREIKWIKPSVCYLHTDYVGIGYDDNVSRDNYKILKLLGRLPKDDDSDPNCEIYEFKSDSWKTLVAKFDWDIDIRCNNGVSVKGKMYWIAKKKEDFTIIRFDFSTETFKEICVCPYTLVTRLGCFDGDRLSLLLQGEESQGIEVWMTNKLSDKVVSFSQYFNVTTPDLPALHLQSCMACPGYSIGKRRNIRVWCEGSVDVDDKSYVIITFYEIDEGGVIKQIETASYGQFEYDDPFICCYVYVPSLIPIQ.

The 48-residue stretch at 6-53 (CLLLPSLPFELIEEILYKIPAESLIRFKSTCKKWYNLITEKRFMYNHL) folds into the F-box domain.

This is F-box protein At3g08750 from Arabidopsis thaliana (Mouse-ear cress).